Reading from the N-terminus, the 238-residue chain is Protein FEV (238 aa).

Residues 47–127 constitute a DNA-binding region (ETS); that stretch reads IQLWQFLLEL…HGKRYAYRFD (81 aa). The segment at 129–238 is may mediate active transcriptional repression; that stretch reads QGLAQACQPP…AASHLGGHYH (110 aa).

This sequence belongs to the ETS family. In brain, exclusively expressed in the major serotonergic neurons of the dorsal and median raphe nuclei located in the midbrain and pons. Also detected in prostate and small intestine.

The protein localises to the nucleus. Functions as a transcriptional regulator. According to PubMed:12761502, it functions as a transcriptional repressor. Functions in the differentiation and the maintenance of the central serotonergic neurons. May play a role in cell growth. The polypeptide is Protein FEV (FEV) (Homo sapiens (Human)).